Consider the following 359-residue polypeptide: UDP-N-acetylglucosamine--N-acetylmuramyl-(pentapeptide) pyrophosphoryl-undecaprenol N-acetylglucosamine transferase (359 aa).

UDP-N-acetyl-alpha-D-glucosamine is bound by residues 15-17, N127, R166, S191, I245, 264-269, and Q290; these read TGG and ALTVSE.

The protein belongs to the glycosyltransferase 28 family. MurG subfamily.

It localises to the cell inner membrane. It catalyses the reaction di-trans,octa-cis-undecaprenyl diphospho-N-acetyl-alpha-D-muramoyl-L-alanyl-D-glutamyl-meso-2,6-diaminopimeloyl-D-alanyl-D-alanine + UDP-N-acetyl-alpha-D-glucosamine = di-trans,octa-cis-undecaprenyl diphospho-[N-acetyl-alpha-D-glucosaminyl-(1-&gt;4)]-N-acetyl-alpha-D-muramoyl-L-alanyl-D-glutamyl-meso-2,6-diaminopimeloyl-D-alanyl-D-alanine + UDP + H(+). The protein operates within cell wall biogenesis; peptidoglycan biosynthesis. Its function is as follows. Cell wall formation. Catalyzes the transfer of a GlcNAc subunit on undecaprenyl-pyrophosphoryl-MurNAc-pentapeptide (lipid intermediate I) to form undecaprenyl-pyrophosphoryl-MurNAc-(pentapeptide)GlcNAc (lipid intermediate II). In Pseudomonas putida (strain GB-1), this protein is UDP-N-acetylglucosamine--N-acetylmuramyl-(pentapeptide) pyrophosphoryl-undecaprenol N-acetylglucosamine transferase.